Consider the following 353-residue polypeptide: Tsukushi (353 aa).

The N-terminal stretch at 1–16 (MPWPLLLLLAVSGAQT) is a signal peptide. Residues 17–58 (TRPCFPGCQCEVETFGLFDSFSLTRVDCSGLGPHIMPVPIPL) form the LRRNT domain. LRR repeat units lie at residues 59–80 (DTAHLDLSSNRLEMVNESVLAG), 85–106 (TLAGLDLSHNLLTSISPTAFSR), 109–130 (YLESLDLSHNGLTALPAESFTS), 132–153 (PLSDVNLSHNQLREVSVSAFTT), 159–179 (ALHVDLSHNLIHRLVPHPTRA), 185–206 (TIQSLNLAWNRLHAVPNLRDLP), 207–227 (LRYLSLDGNPLAVIGPGAFAG), 230–249 (GLTHLSLASLQRLPELAPSG), 255–276 (GLQVLDLSGNPKLNWAGAEVFS), and 280–301 (SLQELDLSGTNLVPLPEALLLH). Asparagine 74 carries N-linked (GlcNAc...) asparagine glycosylation. N-linked (GlcNAc...) asparagine glycosylation is present at asparagine 137.

Interacts with FZD4 (via FZ domain); competes with WNT2B for binding to FZD4, inhibiting Wnt signaling and repressing peripheral eye development. Interacts with TGFB1; the interaction contributes to regulation of the hair cycle. Interacts with netrin. Interacts with CCN2.

It is found in the secreted. Functionally, contributes to various developmental events and other processes such as wound healing and cholesterol homeostasis through its interactions with multiple signaling pathways. Wnt signaling inhibitor which competes with WNT2B for binding to Wnt receptor FZD4 and represses WNT2B-dependent development of the peripheral eye. Plays a role in regulating the hair cycle by controlling TGFB1 signaling. Required for the development of the anterior commissure in the brain by inhibiting neurite outgrowth. Essential for terminal differentiation of hippocampal neural stem cells. Plays a role in regulating bone elongation and bone mass by modulating growth plate chondrocyte function and overall body size. Required for development of the inner ear through its involvement in stereocilia formation in inner hair cells. Facilitates wound healing by inhibiting secretion of TGFB1 from macrophages which prevents myofibroblast differentiation, maintaining inflammatory cell quiescence. Plays a role in cholesterol homeostasis by reducing circulating high-density lipoprotein cholesterol, lowering cholesterol efflux capacity and decreasing cholesterol-to-bile acid conversion in the liver. In one study, shown to negatively regulate sympathetic innervation in brown fat, leading to reduced energy expenditure. In another study, shown not to affect brown fat thermogenic capacity, body weight gain or glucose homeostasis. The protein is Tsukushi (TSKU) of Homo sapiens (Human).